Reading from the N-terminus, the 826-residue chain is (2S)-3-sulfopropanediol dehydratase (826 aa).

Residues 33 to 695 (PRVNRLRQAF…NTNASIDGRK (663 aa)) form the PFL domain. Cys464 acts as the Cysteine radical intermediate in catalysis. The Proton acceptor role is filled by Glu466. Residues 706–826 (PVHTDGGSHD…DLIQRTELHF (121 aa)) form the Glycine radical domain. Position 802 is a glycine radical (Gly802).

The protein belongs to the glycyl radical enzyme (GRE) family. Post-translationally, requires the activating protein HpfH to generate the key active site glycyl radical on Gly-802 that is involved in catalysis.

It catalyses the reaction (2S)-3-sulfopropanediol = 3-oxopropane-1-sulfonate + H2O. It functions in the pathway organosulfur degradation; alkanesulfonate degradation. Functionally, involved in the degradation of the organosulfur compound 2(S)-dihydroxypropanesulfonate (DHPS). Catalyzes the radical-mediated dehydration of DHPS to produce 3-sulfopropionaldehyde (3-oxopropane-1-sulfonate). The polypeptide is (2S)-3-sulfopropanediol dehydratase (Klebsiella oxytoca).